Consider the following 1047-residue polypeptide: Ribonucleoside-diphosphate reductase subunit alpha (1047 aa).

3 ATP-cone domains span residues 9–111 (CTIV…KAHR), 118–219 (LSVI…ARVR), and 237–327 (FEVL…EALD). Substrate-binding positions include threonine 442, 457–458 (SC), glycine 486, 670–674 (NLCTE), and 857–861 (PTATI). Cysteine 458 and cysteine 687 are oxidised to a cystine. Residue asparagine 670 is the Proton acceptor of the active site. Cysteine 672 functions as the Cysteine radical intermediate in the catalytic mechanism. Glutamate 674 acts as the Proton acceptor in catalysis.

It belongs to the ribonucleoside diphosphate reductase large chain family. In terms of assembly, tetramer of two alpha and two beta subunits.

It carries out the reaction a 2'-deoxyribonucleoside 5'-diphosphate + [thioredoxin]-disulfide + H2O = a ribonucleoside 5'-diphosphate + [thioredoxin]-dithiol. With respect to regulation, under complex allosteric control mediated by deoxynucleoside triphosphates and ATP binding. The type of nucleotide bound at the specificity site determines substrate preference. It seems probable that ATP makes the enzyme reduce CDP and UDP, dGTP favors ADP reduction and dTTP favors GDP reduction. In terms of biological role, provides the precursors necessary for DNA synthesis. Catalyzes the biosynthesis of deoxyribonucleotides from the corresponding ribonucleotides. This is Ribonucleoside-diphosphate reductase subunit alpha (nrdA) from Chlamydia muridarum (strain MoPn / Nigg).